The chain runs to 976 residues: Vacuolar membrane protease (976 aa).

The Cytoplasmic portion of the chain corresponds to Met-1–Lys-15. The helical transmembrane segment at Thr-16–Asp-36 threads the bilayer. Residues His-37 to Leu-359 are Vacuolar-facing. N-linked (GlcNAc...) asparagine glycans are attached at residues Asn-96 and Asn-121. Residues His-156 and Asp-168 each coordinate Zn(2+). Asn-189 carries an N-linked (GlcNAc...) asparagine glycan. The active-site Proton acceptor is Glu-200. Glu-201 contacts Zn(2+). N-linked (GlcNAc...) asparagine glycans are attached at residues Asn-212 and Asn-217. Glu-226 and His-300 together coordinate Zn(2+). Residues Phe-360–Ile-380 traverse the membrane as a helical segment. The Cytoplasmic segment spans residues Ser-381 to Trp-392. The chain crosses the membrane as a helical span at residues Leu-393–Phe-412. Residues Ser-413 to Tyr-428 lie on the Vacuolar side of the membrane. Residues Phe-429 to Cys-449 form a helical membrane-spanning segment. The Cytoplasmic segment spans residues Ser-450 to Ser-461. Residues Leu-462–Leu-482 traverse the membrane as a helical segment. Topologically, residues Tyr-483–Ser-496 are vacuolar. The chain crosses the membrane as a helical span at residues Ile-497 to Met-517. The Cytoplasmic segment spans residues Arg-518–Tyr-627. A disordered region spans residues Arg-528–Glu-610. The span at Asn-549 to Thr-558 shows a compositional bias: polar residues. The segment covering Ser-559–Asp-570 has biased composition (low complexity). Basic and acidic residues predominate over residues Asn-582 to Pro-601. The chain crosses the membrane as a helical span at residues Ala-628–Val-648. Residues Asp-649–Asp-668 lie on the Vacuolar side of the membrane. Residue Asn-656 is glycosylated (N-linked (GlcNAc...) asparagine). The helical transmembrane segment at Val-669–Tyr-689 threads the bilayer. Topologically, residues Lys-690–Asn-692 are cytoplasmic. A helical transmembrane segment spans residues Tyr-693–Val-713. Over His-714–Leu-976 the chain is Vacuolar. 5 N-linked (GlcNAc...) asparagine glycosylation sites follow: Asn-768, Asn-796, Asn-811, Asn-866, and Asn-937.

It belongs to the peptidase M28 family. It depends on Zn(2+) as a cofactor.

The protein localises to the vacuole membrane. In terms of biological role, may be involved in vacuolar sorting and osmoregulation. This is Vacuolar membrane protease from Saccharomyces cerevisiae (strain JAY291) (Baker's yeast).